The primary structure comprises 318 residues: Methionyl-tRNA formyltransferase (318 aa).

Position 120 to 123 (Ser-120 to Pro-123) interacts with (6S)-5,6,7,8-tetrahydrofolate.

Belongs to the Fmt family.

The catalysed reaction is L-methionyl-tRNA(fMet) + (6R)-10-formyltetrahydrofolate = N-formyl-L-methionyl-tRNA(fMet) + (6S)-5,6,7,8-tetrahydrofolate + H(+). Functionally, attaches a formyl group to the free amino group of methionyl-tRNA(fMet). The formyl group appears to play a dual role in the initiator identity of N-formylmethionyl-tRNA by promoting its recognition by IF2 and preventing the misappropriation of this tRNA by the elongation apparatus. In Variovorax paradoxus (strain S110), this protein is Methionyl-tRNA formyltransferase.